The sequence spans 270 residues: Tetraspanin-14 (270 aa).

The Cytoplasmic segment spans residues 1 to 17 (MHYYRYSNAKVSCWYKY). The helical transmembrane segment at 18 to 38 (LLFSYNIIFWLAGVVFLGVGL) threads the bilayer. Residues 39–61 (WAWSEKGVLSDLTKVTRMHGIDP) are Extracellular-facing. Residues 62 to 82 (VVLVLMVGVVMFTLGFAGCVG) traverse the membrane as a helical segment. Residues 83–92 (ALRENICLLN) lie on the Cytoplasmic side of the membrane. Residues 93–113 (FFCGTIVLIFFLELAVAVLAF) form a helical membrane-spanning segment. Topologically, residues 114 to 232 (LFQDWVRDRF…QALESWLPRN (119 aa)) are extracellular. The necessary and sufficient for interaction with ADAM10 stretch occupies residues 114–232 (LFQDWVRDRF…QALESWLPRN (119 aa)). 4 cysteine pairs are disulfide-bonded: cysteine 153–cysteine 221, cysteine 154–cysteine 186, cysteine 170–cysteine 180, and cysteine 187–cysteine 200. N-linked (GlcNAc...) asparagine glycosylation occurs at asparagine 169. A helical membrane pass occupies residues 233–253 (IYIVAGVFIAISLLQIFGIFL). The Cytoplasmic segment spans residues 254-270 (ARTLISDIEAVKAGHHF).

Belongs to the tetraspanin (TM4SF) family. As to quaternary structure, interacts with ADAM10; the interaction promotes ADAM10 maturation and cell surface expression.

The protein resides in the cell membrane. In terms of biological role, part of TspanC8 subgroup, composed of 6 members that interact with the transmembrane metalloprotease ADAM10. This interaction is required for ADAM10 exit from the endoplasmic reticulum and for enzymatic maturation and trafficking to the cell surface as well as substrate specificity. Different TspanC8/ADAM10 complexes have distinct substrates. Negatively regulates ADAM10-mediated cleavage of GP6. Promotes ADAM10-mediated cleavage of CDH5. This Homo sapiens (Human) protein is Tetraspanin-14.